Reading from the N-terminus, the 446-residue chain is Cyclin-T1-1 (446 aa).

It belongs to the cyclin family. Cyclin T subfamily.

This is Cyclin-T1-1 (CYCT1-1) from Oryza sativa subsp. japonica (Rice).